An 865-amino-acid polypeptide reads, in one-letter code: Alanine--tRNA ligase (865 aa).

4 residues coordinate Zn(2+): H556, H560, C660, and H664.

The protein belongs to the class-II aminoacyl-tRNA synthetase family. Zn(2+) is required as a cofactor.

It localises to the cytoplasm. It catalyses the reaction tRNA(Ala) + L-alanine + ATP = L-alanyl-tRNA(Ala) + AMP + diphosphate. In terms of biological role, catalyzes the attachment of alanine to tRNA(Ala) in a two-step reaction: alanine is first activated by ATP to form Ala-AMP and then transferred to the acceptor end of tRNA(Ala). Also edits incorrectly charged Ser-tRNA(Ala) and Gly-tRNA(Ala) via its editing domain. This chain is Alanine--tRNA ligase, found in Ruthia magnifica subsp. Calyptogena magnifica.